The following is a 286-amino-acid chain: Pyridoxal kinase PdxY (286 aa).

Residues Ser-9 and 44-45 (TQ) each bind substrate. ATP-binding positions include Asp-111, Ala-143, Glu-148, Lys-181, and 208–211 (RPLV). Asp-223 is a substrate binding site.

The protein belongs to the pyridoxine kinase family. PdxY subfamily. In terms of assembly, homodimer. It depends on Mg(2+) as a cofactor.

The catalysed reaction is pyridoxal + ATP = pyridoxal 5'-phosphate + ADP + H(+). Its pathway is cofactor metabolism; pyridoxal 5'-phosphate salvage; pyridoxal 5'-phosphate from pyridoxal: step 1/1. Functionally, pyridoxal kinase involved in the salvage pathway of pyridoxal 5'-phosphate (PLP). Catalyzes the phosphorylation of pyridoxal to PLP. The sequence is that of Pyridoxal kinase PdxY from Yersinia pseudotuberculosis serotype I (strain IP32953).